A 365-amino-acid polypeptide reads, in one-letter code: Snurportin-1 (365 aa).

In terms of domain architecture, IBB spans 10–72 (GGVALAAPNS…RLAEGDWAGV (63 aa)). Disordered stretches follow at residues 15–34 (AAPNSPAAPHPRLSAYKGRG) and 69–90 (WAGVESDEDGGEDGDGEEEMEV). Residues 73–90 (ESDEDGGEDGDGEEEMEV) show a composition bias toward acidic residues. The tract at residues 129–131 (GKR) is interaction with m3G-cap structure. The segment at 211-333 (LSSKIQEEEG…GKAQPSAEAA (123 aa)) is necessary for binding to the m3G-cap structure. The tract at residues 317-365 (RSKKLAAGKAQPSAEAAARNGHYELEHLSTPQPANSAQGQEEAGSQMEN) is disordered. A compositionally biased stretch (polar residues) spans 345 to 355 (STPQPANSAQG).

This sequence belongs to the snurportin family.

The protein localises to the nucleus. Its subcellular location is the cytoplasm. Functions as an U snRNP-specific nuclear import adapter. Involved in the trimethylguanosine (m3G)-cap-dependent nuclear import of U snRNPs. Binds specifically to the terminal m3G-cap U snRNAs. In Gallus gallus (Chicken), this protein is Snurportin-1 (SNUPN).